A 733-amino-acid polypeptide reads, in one-letter code: Alpha-galactosidase 1 (733 aa).

Asp-480 (nucleophile) is an active-site residue. The active-site Proton donor is the Asp-550.

Belongs to the glycosyl hydrolase 36 family.

It carries out the reaction Hydrolysis of terminal, non-reducing alpha-D-galactose residues in alpha-D-galactosides, including galactose oligosaccharides, galactomannans and galactolipids.. Its function is as follows. Alpha-galactosidase associated with the raffinose operon. The protein is Alpha-galactosidase 1 (agaR) of Pediococcus pentosaceus.